The primary structure comprises 562 residues: Glutamine--tRNA ligase (562 aa).

The 'HIGH' region motif lies at 35 to 45 (PEPNGYLHIGH). ATP-binding positions include 36–38 (EPN) and 42–48 (HIGHAKS). L-glutamine-binding residues include aspartate 68 and tyrosine 213. ATP contacts are provided by residues threonine 232 and 264 to 265 (RL). The short motif at 271–275 (ITSKR) is the 'KMSKS' region element.

Belongs to the class-I aminoacyl-tRNA synthetase family. Monomer.

It is found in the cytoplasm. It catalyses the reaction tRNA(Gln) + L-glutamine + ATP = L-glutaminyl-tRNA(Gln) + AMP + diphosphate. This is Glutamine--tRNA ligase from Neisseria meningitidis serogroup A / serotype 4A (strain DSM 15465 / Z2491).